The following is a 363-amino-acid chain: 3-dehydroquinate synthase (363 aa).

Residues 72 to 77 (SGEKEK), 130 to 131 (TT), Lys-142, and Lys-151 each bind NAD(+). Zn(2+) is bound by residues Glu-184, His-247, and His-264.

This sequence belongs to the sugar phosphate cyclases superfamily. Dehydroquinate synthase family. The cofactor is Co(2+). It depends on Zn(2+) as a cofactor. Requires NAD(+) as cofactor.

It is found in the cytoplasm. It catalyses the reaction 7-phospho-2-dehydro-3-deoxy-D-arabino-heptonate = 3-dehydroquinate + phosphate. It participates in metabolic intermediate biosynthesis; chorismate biosynthesis; chorismate from D-erythrose 4-phosphate and phosphoenolpyruvate: step 2/7. Its function is as follows. Catalyzes the conversion of 3-deoxy-D-arabino-heptulosonate 7-phosphate (DAHP) to dehydroquinate (DHQ). This chain is 3-dehydroquinate synthase, found in Bacillus anthracis (strain A0248).